Here is a 283-residue protein sequence, read N- to C-terminus: 4-diphosphocytidyl-2-C-methyl-D-erythritol kinase (283 aa).

Lysine 13 is a catalytic residue. 96 to 106 (PMGGGIGGGSS) provides a ligand contact to ATP. Residue aspartate 138 is part of the active site.

This sequence belongs to the GHMP kinase family. IspE subfamily.

The catalysed reaction is 4-CDP-2-C-methyl-D-erythritol + ATP = 4-CDP-2-C-methyl-D-erythritol 2-phosphate + ADP + H(+). The protein operates within isoprenoid biosynthesis; isopentenyl diphosphate biosynthesis via DXP pathway; isopentenyl diphosphate from 1-deoxy-D-xylulose 5-phosphate: step 3/6. Its function is as follows. Catalyzes the phosphorylation of the position 2 hydroxy group of 4-diphosphocytidyl-2C-methyl-D-erythritol. The sequence is that of 4-diphosphocytidyl-2-C-methyl-D-erythritol kinase from Pseudomonas fluorescens (strain SBW25).